A 182-amino-acid chain; its full sequence is MKSQETRSSWKRRGSRYKARRRAVDILFEAEMRDIDPVAIVEDRVVLSRLNGTDVNQVPSYTKEIVSGAAMELDRLDELIAAHLAEDWSLERIMTVDRAILRVSVWELIFNPDVPLATAIIEGVELASEYSTDVSPAYVHALLDSIAKNIDEYRAGSVTPVENSEAEAAGYPVEESIEEDSQ.

Positions 159–182 are disordered; that stretch reads TPVENSEAEAAGYPVEESIEEDSQ.

The protein belongs to the NusB family.

Involved in transcription antitermination. Required for transcription of ribosomal RNA (rRNA) genes. Binds specifically to the boxA antiterminator sequence of the ribosomal RNA (rrn) operons. In Corynebacterium diphtheriae (strain ATCC 700971 / NCTC 13129 / Biotype gravis), this protein is Transcription antitermination protein NusB.